A 994-amino-acid chain; its full sequence is NACHT, LRR and PYD domains-containing protein 4 (994 aa).

The Pyrin domain occupies 1–94 (MAASFFSDFG…CMKVMRERTG (94 aa)). The region spanning 149-472 (RTVIIQGPQG…FYLLKSHLDH (324 aa)) is the NACHT domain. Position 155 to 162 (155 to 162 (GPQGIGKT)) interacts with ATP. LRR repeat units lie at residues 637–660 (SGHLRELQVQDSTLSESTFVTWCN), 698–721 (YLSFTLTKLSRDDIRSLCDALNYP), 722–745 (AGNVKELALVNCHLSPIDCEVLAG), 750–777 (NKKLTYLNVSCNQLDTGVPLLCEALCSP), 806–833 (NKSVRYLDLSANVLKDEGLKTLCEALKH), 863–886 (NQNLKILQIGCNEIGDVGVQLLCR), 920–943 (SKTLQQLNLTLNTLDHTGVVVLCE), and 949–972 (ECALQVLGLRKTDFDEETQALLTA).

It belongs to the NLRP family. Interacts with CHUK/IKKA, inhibiting its kinase activity.

Functionally, may be involved in inflammation and recognition of cytosolic pathogen-associated molecular patterns (PAMPs) not intercepted by membrane-bound receptors. Acts as a negative regulator of the type I interferon signaling pathway by serving as an adapter to promote DTX4-mediated ubiquitination of activated TBK1, and its subsequent degradation. Suppresses NF-kappaB induction by the cytokines TNFA and IL1B, suggesting that it operates at a point of convergence in these two cytokine signaling pathways. In Homo sapiens (Human), this protein is NACHT, LRR and PYD domains-containing protein 4.